The chain runs to 375 residues: Succinyl-diaminopimelate desuccinylase (375 aa).

Residue histidine 66 coordinates Zn(2+). Aspartate 68 is a catalytic residue. Zn(2+) is bound at residue aspartate 99. Glutamate 133 serves as the catalytic Proton acceptor. Glutamate 134, glutamate 162, and histidine 348 together coordinate Zn(2+).

This sequence belongs to the peptidase M20A family. DapE subfamily. In terms of assembly, homodimer. Zn(2+) serves as cofactor. Requires Co(2+) as cofactor.

It carries out the reaction N-succinyl-(2S,6S)-2,6-diaminopimelate + H2O = (2S,6S)-2,6-diaminopimelate + succinate. It participates in amino-acid biosynthesis; L-lysine biosynthesis via DAP pathway; LL-2,6-diaminopimelate from (S)-tetrahydrodipicolinate (succinylase route): step 3/3. In terms of biological role, catalyzes the hydrolysis of N-succinyl-L,L-diaminopimelic acid (SDAP), forming succinate and LL-2,6-diaminopimelate (DAP), an intermediate involved in the bacterial biosynthesis of lysine and meso-diaminopimelic acid, an essential component of bacterial cell walls. This is Succinyl-diaminopimelate desuccinylase from Stenotrophomonas maltophilia (strain K279a).